The chain runs to 437 residues: Methylenetetrahydrofolate--tRNA-(uracil-5-)-methyltransferase TrmFO (437 aa).

10–15 (GGGLAG) contacts FAD.

The protein belongs to the MnmG family. TrmFO subfamily. Requires FAD as cofactor.

The protein resides in the cytoplasm. It catalyses the reaction uridine(54) in tRNA + (6R)-5,10-methylene-5,6,7,8-tetrahydrofolate + NADH + H(+) = 5-methyluridine(54) in tRNA + (6S)-5,6,7,8-tetrahydrofolate + NAD(+). The enzyme catalyses uridine(54) in tRNA + (6R)-5,10-methylene-5,6,7,8-tetrahydrofolate + NADPH + H(+) = 5-methyluridine(54) in tRNA + (6S)-5,6,7,8-tetrahydrofolate + NADP(+). In terms of biological role, catalyzes the folate-dependent formation of 5-methyl-uridine at position 54 (M-5-U54) in all tRNAs. The chain is Methylenetetrahydrofolate--tRNA-(uracil-5-)-methyltransferase TrmFO from Geotalea daltonii (strain DSM 22248 / JCM 15807 / FRC-32) (Geobacter daltonii).